The sequence spans 480 residues: Probable serine/threonine-protein phosphatase 2A regulatory subunit B'' subunit TON2 (480 aa).

3 EF-hand domains span residues 186–221 (VSLTQARIDMSELDEDSDGFLHSDEMESYIGGLIPN), 294–329 (TSAQRICDMFLALDKDMSGSLCKQELKEYADGTLTE), and 369–404 (DTPEGLTYLFRCLDLQGRGFLTTADIHSLFRDVHQK). Positions 307, 309, 311, 313, and 318 each coordinate Ca(2+).

In terms of assembly, interacts with PP2AA1. In terms of tissue distribution, widely expressed.

Its subcellular location is the cytoplasm. It is found in the cytoskeleton. Probable regulatory subunit of type 2A protein phosphatase involved in the control of the dynamic organization of the cortical cytoskeleton. Plays an important role in the organization of interphase microtubule arrays in part through the regulation of nucleation geometry. Required for the reorganization of cortical arrays in response to light. This is Probable serine/threonine-protein phosphatase 2A regulatory subunit B'' subunit TON2 (TON2) from Arabidopsis thaliana (Mouse-ear cress).